A 264-amino-acid polypeptide reads, in one-letter code: RNA-binding protein pos-1 (264 aa).

Positions glutamine 56–proline 82 are disordered. A compositionally biased stretch (polar residues) spans glutamine 61–alanine 74. C3H1-type zinc fingers lie at residues alanine 98 to histidine 126 and lysine 141 to valine 169. Residues cysteine 104, cysteine 113, cysteine 119, histidine 123, cysteine 147, cysteine 156, cysteine 162, and histidine 166 each coordinate Zn(2+).

Monomer.

The protein resides in the cytoplasm. Its function is as follows. RNA-binding protein that coordinates cell fate specification and differentiation during early embryogenesis. Binds to a consensus pos-1 recognition element (PRE) consisting of the sequence 5'-UA(U 2-3)RGD(N 1-3)G-3', where R is any purine, D is A, G, or U, and N is any base. The PRE motif is found within the 3' untranslated region of many maternal transcripts required for early development. Binds to the 3' untranslated region (UTR) of Notch receptor homolog glp-1, thereby repressing glp-1 translation in the posterior blastomeres in the embryo. Binding to glp-1 3' UTR excludes cell fate regulator gld-1 binding to an overlapping binding site in the glp-1 3' UTR. Binds to the neg-1 3'UTR thereby opposing neg-1 expression and cytoplasmic polyadenylation of the neg-1 mRNA poly(A) tail promoted by gld-2 and gld-3. By inhibiting the cytoplasmic lengthening of neg-1 mRNA, restricts the accumulation of neg-1 protein and promotes endo-mesoderm development in anterior blastomeres. Essential for germline specification. This Caenorhabditis elegans protein is RNA-binding protein pos-1.